The primary structure comprises 511 residues: MASDSSFPGASSNVAEYSVSEISGALKRTVEDTFGHVRVRGEISGYRGPHSSGHAYFALKDDRARLEAVIWRGSMSRLRFRPEEGMEVIATGKLTTYPGSSKYQIVIEQMEPAGAGALMALLEERKQRLAAEGLFDPALKQLLPFMPRVIGVVTSPTGAVIRDIIHRISDRYPLRVIVWPVRVQGDTCGPEVATAVNGFNTLPDDGPIPRPDVLIVARGGGSLEDLWGFNDEIVVRAVAASHIPVISAVGHETDWTLIDLAADMRAPTPTGAAEMAVPVKADLQASLASQSARLSSAMSRFFDQKRQAHRAAARAMPSADQLLALPRRRFDEAASRLTRALFVNTQKKRVHFDGHARQLSPRLLQRRLVELERGVTMLGQRLPRALEAFLRERRTAFTHRANRLSPEPILRRTRLTGSTLEQLDRRRDQAVRLLIERVKRRSQELDRLMRTLSYESVLERGFAVVFDAQGKPVKQAAAVSPGDALSIRFRDGDVGVVARAGLTIPDPTKGQ.

The protein belongs to the XseA family. Heterooligomer composed of large and small subunits.

Its subcellular location is the cytoplasm. The enzyme catalyses Exonucleolytic cleavage in either 5'- to 3'- or 3'- to 5'-direction to yield nucleoside 5'-phosphates.. Its function is as follows. Bidirectionally degrades single-stranded DNA into large acid-insoluble oligonucleotides, which are then degraded further into small acid-soluble oligonucleotides. The polypeptide is Exodeoxyribonuclease 7 large subunit (Brucella melitensis biotype 2 (strain ATCC 23457)).